The sequence spans 328 residues: Methionyl-tRNA formyltransferase (328 aa).

110-113 (SNLP) lines the (6S)-5,6,7,8-tetrahydrofolate pocket.

This sequence belongs to the Fmt family.

The enzyme catalyses L-methionyl-tRNA(fMet) + (6R)-10-formyltetrahydrofolate = N-formyl-L-methionyl-tRNA(fMet) + (6S)-5,6,7,8-tetrahydrofolate + H(+). Functionally, attaches a formyl group to the free amino group of methionyl-tRNA(fMet). The formyl group appears to play a dual role in the initiator identity of N-formylmethionyl-tRNA by promoting its recognition by IF2 and preventing the misappropriation of this tRNA by the elongation apparatus. The polypeptide is Methionyl-tRNA formyltransferase (Bifidobacterium longum (strain DJO10A)).